An 83-amino-acid polypeptide reads, in one-letter code: Small ribosomal subunit protein bS20 (83 aa).

Belongs to the bacterial ribosomal protein bS20 family.

Binds directly to 16S ribosomal RNA. The sequence is that of Small ribosomal subunit protein bS20 from Amoebophilus asiaticus (strain 5a2).